The sequence spans 251 residues: Anamorsin homolog (251 aa).

The interval 1–154 (MINFSNTLVI…AENPDFNKSD (154 aa)) is N-terminal SAM-like domain. Residues 155–167 (DDNNLVSSDEEIY) form a linker region. Cys170, Cys181, Cys184, and Cys186 together coordinate [2Fe-2S] cluster. Residues 170–186 (CEDKKKVVNRVCDNCTC) form a fe-S binding site A region. Cys216, Cys219, Cys227, and Cys230 together coordinate [4Fe-4S] cluster. 2 consecutive short sequence motifs (cx2C motif) follow at residues 216–219 (CGNC) and 227–230 (CGSC). The interval 216–230 (CGNCYLGDAFRCGSC) is fe-S binding site B.

Belongs to the anamorsin family. As to quaternary structure, monomer. Requires [2Fe-2S] cluster as cofactor. It depends on [4Fe-4S] cluster as a cofactor.

It is found in the cytoplasm. It localises to the mitochondrion intermembrane space. In terms of biological role, component of the cytosolic iron-sulfur (Fe-S) protein assembly (CIA) machinery. Required for the maturation of extramitochondrial Fe-S proteins. Part of an electron transfer chain functioning in an early step of cytosolic Fe-S biogenesis, facilitating the de novo assembly of a [4Fe-4S] cluster on the cytosolic Fe-S scaffold complex. Electrons are transferred from NADPH via a FAD- and FMN-containing diflavin oxidoreductase. Together with the diflavin oxidoreductase, also required for the assembly of the diferric tyrosyl radical cofactor of ribonucleotide reductase (RNR), probably by providing electrons for reduction during radical cofactor maturation in the catalytic small subunit. This Plasmodium yoelii yoelii protein is Anamorsin homolog.